The chain runs to 236 residues: 1-(5-phosphoribosyl)-5-[(5-phosphoribosylamino)methylideneamino] imidazole-4-carboxamide isomerase (236 aa).

Residue Asp-8 is the Proton acceptor of the active site. Asp-129 acts as the Proton donor in catalysis.

Belongs to the HisA/HisF family.

The protein resides in the cytoplasm. It carries out the reaction 1-(5-phospho-beta-D-ribosyl)-5-[(5-phospho-beta-D-ribosylamino)methylideneamino]imidazole-4-carboxamide = 5-[(5-phospho-1-deoxy-D-ribulos-1-ylimino)methylamino]-1-(5-phospho-beta-D-ribosyl)imidazole-4-carboxamide. It functions in the pathway amino-acid biosynthesis; L-histidine biosynthesis; L-histidine from 5-phospho-alpha-D-ribose 1-diphosphate: step 4/9. The chain is 1-(5-phosphoribosyl)-5-[(5-phosphoribosylamino)methylideneamino] imidazole-4-carboxamide isomerase from Methanoregula boonei (strain DSM 21154 / JCM 14090 / 6A8).